The primary structure comprises 312 residues: Glycerol-3-phosphate dehydrogenase [NAD(P)+] (312 aa).

Residues Trp11, Arg30, Arg31, and Lys95 each contribute to the NADPH site. Residues Lys95, Gly123, and Ser125 each coordinate sn-glycerol 3-phosphate. Ala127 is a binding site for NADPH. Sn-glycerol 3-phosphate is bound by residues Lys177, Asp230, Ser240, Arg241, and Asn242. Lys177 serves as the catalytic Proton acceptor. Arg241 contacts NADPH. The NADPH site is built by Val265 and Glu267.

It belongs to the NAD-dependent glycerol-3-phosphate dehydrogenase family.

The protein resides in the cytoplasm. The catalysed reaction is sn-glycerol 3-phosphate + NAD(+) = dihydroxyacetone phosphate + NADH + H(+). It catalyses the reaction sn-glycerol 3-phosphate + NADP(+) = dihydroxyacetone phosphate + NADPH + H(+). The protein operates within membrane lipid metabolism; glycerophospholipid metabolism. In terms of biological role, catalyzes the reduction of the glycolytic intermediate dihydroxyacetone phosphate (DHAP) to sn-glycerol 3-phosphate (G3P), the key precursor for phospholipid synthesis. This chain is Glycerol-3-phosphate dehydrogenase [NAD(P)+], found in Helicobacter pylori (strain Shi470).